Consider the following 953-residue polypeptide: Isoleucine--tRNA ligase (953 aa).

The 'HIGH' region signature appears at 57-67; the sequence is PYANGDIHIGH. Residue E582 participates in L-isoleucyl-5'-AMP binding. The short motif at 623–627 is the 'KMSKS' region element; it reads KMSKS. K626 lines the ATP pocket. Zn(2+)-binding residues include C916, C919, C936, and C939.

This sequence belongs to the class-I aminoacyl-tRNA synthetase family. IleS type 1 subfamily. In terms of assembly, monomer. It depends on Zn(2+) as a cofactor.

The protein resides in the cytoplasm. The catalysed reaction is tRNA(Ile) + L-isoleucine + ATP = L-isoleucyl-tRNA(Ile) + AMP + diphosphate. Catalyzes the attachment of isoleucine to tRNA(Ile). As IleRS can inadvertently accommodate and process structurally similar amino acids such as valine, to avoid such errors it has two additional distinct tRNA(Ile)-dependent editing activities. One activity is designated as 'pretransfer' editing and involves the hydrolysis of activated Val-AMP. The other activity is designated 'posttransfer' editing and involves deacylation of mischarged Val-tRNA(Ile). The polypeptide is Isoleucine--tRNA ligase (Bordetella bronchiseptica (strain ATCC BAA-588 / NCTC 13252 / RB50) (Alcaligenes bronchisepticus)).